A 273-amino-acid chain; its full sequence is Putative inactive beta-glucuronidase protein GUSBP11 (273 aa).

The interval 1 to 20 is disordered; the sequence is MTAAETGRGKPRLGGGSGLG.

This sequence belongs to the glycosyl hydrolase 2 family.

The sequence is that of Putative inactive beta-glucuronidase protein GUSBP11 (GUSBP11) from Homo sapiens (Human).